The sequence spans 160 residues: pH-gated potassium channel KcsA (160 aa).

The Cytoplasmic segment spans residues 1–27 (MPPMLSGLLARLVKLLLGRHGSALHWR). Residues 28-50 (AAGAATVLLVIVLLAGSYLAVLA) traverse the membrane as a helical segment. Over 51-61 (ERGAPGAQLIT) the chain is Extracellular. Residues 62–72 (YPRALWWSVET) constitute an intramembrane region (helical; Pore-forming). Residues 73–80 (ATTVGYGD) constitute an intramembrane region (pore-forming). The Selectivity filter signature appears at 75 to 80 (TVGYGD). The Extracellular portion of the chain corresponds to 81-87 (LYPVTLW). A helical transmembrane segment spans residues 88–111 (GRLVAVVVMVAGITSFGLVTAALA). At 112–160 (TWFVGREQERRGHFVRHSEKAAEEAYTRTTRALHERFDRLERMLDDNRR) the chain is on the cytoplasmic side.

This sequence belongs to the potassium channel family. In terms of assembly, homotetramer.

The protein resides in the cell membrane. Its function is as follows. Acts as a pH-gated potassium ion channel; changing the cytosolic pH from 7 to 4 opens the channel. The polypeptide is pH-gated potassium channel KcsA (kcsA) (Streptomyces coelicolor (strain ATCC BAA-471 / A3(2) / M145)).